Consider the following 198-residue polypeptide: Heme oxygenase PigA (198 aa).

A heme b-binding site is contributed by His26.

Belongs to the heme oxygenase family.

It carries out the reaction heme b + 3 AH2 + 3 O2 + 2 H(+) = biliverdin IXbeta + CO + Fe(2+) + 3 A + 3 H2O. The catalysed reaction is heme b + 3 AH2 + 3 O2 + 3 H(+) = biliverdin IXdelta + CO + Fe(2+) + 3 A + 3 H2O. Involved in heme degradation. Catalyzes the degradation of heme to biliverdin, with the release of iron. Forms biliverdin delta (70%) and beta (30%). Under anaerobic conditions ferredoxin--NADP(+) reductase (fpr) can provide the necessary electrons; Bfd is not required. The protein is Heme oxygenase PigA of Pseudomonas aeruginosa (strain ATCC 15692 / DSM 22644 / CIP 104116 / JCM 14847 / LMG 12228 / 1C / PRS 101 / PAO1).